The sequence spans 77 residues: U8-lycotoxin-Ls1e (77 aa).

The first 20 residues, 1 to 20, serve as a signal peptide directing secretion; the sequence is MKLIIFTGLVLFAIVSLIEA. A propeptide spanning residues 21–26 is cleaved from the precursor; that stretch reads QAENEK.

This sequence belongs to the neurotoxin 19 (CSTX) family. 08 (U8-Lctx) subfamily. In terms of processing, contains 4 disulfide bonds. Expressed by the venom gland.

It is found in the secreted. The chain is U8-lycotoxin-Ls1e from Lycosa singoriensis (Wolf spider).